The following is a 286-amino-acid chain: Energy-coupling factor transporter ATP-binding protein EcfA2 (286 aa).

The 242-residue stretch at I3–S244 folds into the ABC transporter domain. An ATP-binding site is contributed by G40–S47.

Belongs to the ABC transporter superfamily. Energy-coupling factor EcfA family. Forms a stable energy-coupling factor (ECF) transporter complex composed of 2 membrane-embedded substrate-binding proteins (S component), 2 ATP-binding proteins (A component) and 2 transmembrane proteins (T component).

The protein resides in the cell membrane. In terms of biological role, ATP-binding (A) component of a common energy-coupling factor (ECF) ABC-transporter complex. Unlike classic ABC transporters this ECF transporter provides the energy necessary to transport a number of different substrates. The protein is Energy-coupling factor transporter ATP-binding protein EcfA2 of Caldanaerobacter subterraneus subsp. tengcongensis (strain DSM 15242 / JCM 11007 / NBRC 100824 / MB4) (Thermoanaerobacter tengcongensis).